Reading from the N-terminus, the 87-residue chain is uncharacterized protein (87 aa).

The protein to A.fulgidus AF_0255 and AF_1348.

This is an uncharacterized protein from Archaeoglobus fulgidus (strain ATCC 49558 / DSM 4304 / JCM 9628 / NBRC 100126 / VC-16).